The sequence spans 218 residues: Small ribosomal subunit protein uS3c (218 aa).

Residues 47-117 enclose the KH type-2 domain; it reads VRTHIRNSSN…KLKITLSEID (71 aa).

The protein belongs to the universal ribosomal protein uS3 family. In terms of assembly, part of the 30S ribosomal subunit.

It is found in the plastid. It localises to the chloroplast. The polypeptide is Small ribosomal subunit protein uS3c (rps3) (Spirogyra maxima (Green alga)).